The sequence spans 453 residues: Ferruginol synthase (453 aa).

A helical transmembrane segment spans residues leucine 15–valine 35. A heme-binding site is contributed by cysteine 397.

This sequence belongs to the cytochrome P450 family. Heme serves as cofactor. Expressed in leaf glandular trichomes.

It localises to the membrane. The catalysed reaction is abieta-8,11,13-triene + reduced [NADPH--hemoprotein reductase] + O2 = ferruginol + oxidized [NADPH--hemoprotein reductase] + H2O + H(+). The enzyme catalyses ferruginol + reduced [NADPH--hemoprotein reductase] + O2 = 11-hydroxyferruginol + oxidized [NADPH--hemoprotein reductase] + H2O + H(+). It carries out the reaction miltiradiene + 2 reduced [NADPH--hemoprotein reductase] + 2 O2 = 11-oxomiltiradiene + 2 oxidized [NADPH--hemoprotein reductase] + 3 H2O + 2 H(+). It participates in secondary metabolite biosynthesis; terpenoid biosynthesis. Monooxygenase involved in the biosynthesis of labdane-related diterpenes natural products. Catalyzes the oxidation of abietatriene to produce ferruginol. Ferruginol is an intermediate in the biosynthesis of carnosate, a potent antioxidant. May also convert miltiradiene into 11-oxomiltiradiene. The protein is Ferruginol synthase of Salvia pomifera (Apple sage).